Here is a 365-residue protein sequence, read N- to C-terminus: Protein BZR1 homolog 2 (365 aa).

Positions Met1 to Gly30 are enriched in gly residues. Disordered regions lie at residues Met1–Glu45, Ser113–Asn154, Ser191–Ser236, and His344–Ala365. The required for DNA-binding stretch occupies residues Arg31–Ser113. Positions Ser113 to Pro144 are enriched in low complexity. 2 stretches are compositionally biased toward polar residues: residues Ser215–Thr233 and Leu356–Ala365.

This sequence belongs to the BZR/LAT61 family. In terms of assembly, interacts with PUB24.

In terms of biological role, may function in brassinosteroid signaling. The protein is Protein BZR1 homolog 2 of Oryza sativa subsp. japonica (Rice).